Reading from the N-terminus, the 602-residue chain is MEISLVPMENGSAMTLRGGGEAGASCVQSPRGECGCPPTAGLNNQSKETSPRRRATHEDAGQGGRPLPPMPQELPQPRRPSAEDEEGEGDPGLGTVEEDQAPQDSGSLHHQRVLINISGLRFETQLGTLAQFPNTLLGDPVKRLRYFDPLRNEYFFDRNRPSFDGILYYYQSGGRLRRPVNVSLDVFADEIRFYQLGDEAMERFREDEGFIKEEEKPLPRNEFQRQVWLIFEYPESSGSARAIAIVSVLVILISIITFCLETLPEFRDERELLRHPPVPPQPPAPAPGANGSGSGVLSSGPTVAPLLPRTLADPFFIVETTCVIWFTFELLVRFFACPSKAEFSRNIMNIIDIVAIFPYFITLGTELAEQQPGGGGQNGQQAMSLAILRVIRLVRVFRIFKLSRHSKGLQILGKTLQASMRELGLLIFFLFIGVILFSSAVYFAEADNQGSHFSSIPDAFWWAVVTMTTVGYGDMRPITVGGKIVGSLCAIAGVLTIALPVPVIVSNFNYFYHRETDHEEQAALKEEQGIQRRESGLDTGGQRKVSCSKASFCKTGGPLESTDSIRRGSCPLEKCHLKAKSNVDLRRSLYALCLDTSRETDL.

Residues 1 to 107 (MEISLVPMEN…EDQAPQDSGS (107 aa)) are disordered. The tract at residues 1–202 (MEISLVPMEN…FYQLGDEAME (202 aa)) is tetramerization domain. Over 1 to 238 (MEISLVPMEN…LIFEYPESSG (238 aa)) the chain is Cytoplasmic. Residues 66–78 (PLPPMPQELPQPR) show a composition bias toward pro residues. Residue Ser-81 is modified to Phosphoserine; by CK2 and PKA. Lys-212 is covalently cross-linked (Glycyl lysine isopeptide (Lys-Gly) (interchain with G-Cter in SUMO)). Residues 239–260 (SARAIAIVSVLVILISIITFCL) form a helical membrane-spanning segment. The Extracellular portion of the chain corresponds to 261–314 (ETLPEFRDERELLRHPPVPPQPPAPAPGANGSGSGVLSSGPTVAPLLPRTLADP). Positions 274 to 297 (RHPPVPPQPPAPAPGANGSGSGVL) are disordered. Residues 276–286 (PPVPPQPPAPA) show a composition bias toward pro residues. Asn-290 carries an N-linked (GlcNAc...) asparagine glycan. The chain crosses the membrane as a helical span at residues 315-336 (FFIVETTCVIWFTFELLVRFFA). The S-palmitoyl cysteine moiety is linked to residue Cys-337. Topologically, residues 337-347 (CPSKAEFSRNI) are cytoplasmic. The helical transmembrane segment at 348 to 368 (MNIIDIVAIFPYFITLGTELA) threads the bilayer. The Extracellular portion of the chain corresponds to 369–384 (EQQPGGGGQNGQQAMS). Residues 385–405 (LAILRVIRLVRVFRIFKLSRH) form a helical; Voltage-sensor membrane-spanning segment. Residues 406 to 420 (SKGLQILGKTLQASM) are Cytoplasmic-facing. The segment at 407-420 (KGLQILGKTLQASM) is S4-S5 linker. A helical membrane pass occupies residues 421-442 (RELGLLIFFLFIGVILFSSAVY). Residues 443 to 456 (FAEADNQGSHFSSI) lie on the Extracellular side of the membrane. Positions 457–468 (PDAFWWAVVTMT) form an intramembrane region, helical. The short motif at 469–474 (TVGYGD) is the Selectivity filter element. Residues 469-476 (TVGYGDMR) lie within the membrane without spanning it. At 477-483 (PITVGGK) the chain is on the extracellular side. Residues 484–512 (IVGSLCAIAGVLTIALPVPVIVSNFNYFY) form a helical membrane-spanning segment. Over 513–602 (HRETDHEEQA…CLDTSRETDL (90 aa)) the chain is Cytoplasmic. Lys-525 participates in a covalent cross-link: Glycyl lysine isopeptide (Lys-Gly) (interchain with G-Cter in SUMO). 3 positions are modified to phosphoserine; by PKA: Ser-535, Ser-546, and Ser-569. Positions 600–602 (TDL) match the PDZ-binding motif.

Belongs to the potassium channel family. A (Shaker) (TC 1.A.1.2) subfamily. Kv1.5/KCNA5 sub-subfamily. As to quaternary structure, homotetramer and heterotetramer of potassium channel proteins. Interacts with DLG1, which enhances channel currents. Forms a ternary complex with DLG1 and CAV3. Interacts with KCNAB1. Interacts with UBE2I. Interacts with XIRP2; the interaction is required for normal action potential configuration in the heart. Glycosylated. Post-translationally, sumoylated on Lys-212, and Lys-525, preferentially with SUMO3. Sumoylation regulates the voltage sensitivity of the channel. As to expression, expressed in the heart (at protein level). Expressed in the brain and weakly expressed in the thymus, skeletal muscle and spleen.

The protein localises to the cell membrane. The catalysed reaction is K(+)(in) = K(+)(out). Voltage-gated potassium channel that mediates transmembrane potassium transport in excitable membranes. Forms tetrameric potassium-selective channels through which potassium ions pass in accordance with their electrochemical gradient. The channel alternates between opened and closed conformations in response to the voltage difference across the membrane. Can form functional homotetrameric channels and heterotetrameric channels that contain variable proportions of KCNA1, KCNA2, KCNA4, KCNA5, and possibly other family members as well; channel properties depend on the type of alpha subunits that are part of the channel. Channel properties are modulated by cytoplasmic beta subunits that regulate the subcellular location of the alpha subunits and promote rapid inactivation. Homotetrameric channels display rapid activation and slow inactivation. Required for normal electrical conduction including formation of the infranodal ventricular conduction system and normal action potential configuration, as a result of its interaction with XIRP2. May play a role in regulating the secretion of insulin in normal pancreatic islets. Functionally, voltage-gated potassium channel that mediates transmembrane potassium transport in excitable membranes. Forms tetrameric potassium-selective channels through which potassium ions pass in accordance with their electrochemical gradient. The channel alternates between opened and closed conformations in response to the voltage difference across the membrane. Its function is as follows. Inactive. Inhibits expression of isoform 1 and isoform 2. This chain is Potassium voltage-gated channel subfamily A member 5 (Kcna5), found in Mus musculus (Mouse).